The sequence spans 502 residues: Solute carrier family 2, facilitated glucose transporter member 5 (502 aa).

M1 carries the N-acetylmethionine modification. At 1-17 (MEKEDQEKTGKLTLVLA) the chain is on the cytoplasmic side. Residues 18 to 38 (LATFLAAFGSSFQYGYNVAAV) form a helical membrane-spanning segment. A D-fructose-binding site is contributed by Y31. The Extracellular segment spans residues 39 to 67 (NSPSEFMQQFYNDTYYDRNKENIESFTLT). N50 is a glycosylation site (N-linked (GlcNAc...) asparagine). A helical transmembrane segment spans residues 68–90 (LLWSLTVSMFPFGGFIGSLMVGF). The Cytoplasmic portion of the chain corresponds to 91–97 (LVNNLGR). A helical transmembrane segment spans residues 98-118 (KGALLFNNIFSILPAILMGCS). The Extracellular segment spans residues 119–125 (KIAKSFE). Residues 126-148 (IIIASRLLVGICAGISSNVVPMY) traverse the membrane as a helical segment. Residues 149–160 (LGELAPKNLRGA) are Cytoplasmic-facing. Residues 161 to 181 (LGVVPQLFITVGILVAQLFGL) form a helical membrane-spanning segment. Position 166 (Q166) interacts with D-fructose. Topologically, residues 182-191 (RSVLASEEGW) are extracellular. The chain crosses the membrane as a helical span at residues 192 to 212 (PILLGLTGVPAGLQLLLLPFF). Residues 213–276 (PESPRYLLIQ…LFRMQSLRWQ (64 aa)) lie on the Cytoplasmic side of the membrane. A helical transmembrane segment spans residues 277–297 (LISTIVLMAGQQLSGVNAIYY). Residues Q287 and 295–297 (IYY) each bind D-fructose. Topologically, residues 298-312 (YADQIYLSAGVKSND) are extracellular. Residues 313–333 (VQYVTAGTGAVNVFMTMVTVF) form a helical membrane-spanning segment. Residues 334–341 (VVELWGRR) lie on the Cytoplasmic side of the membrane. Residues 342 to 362 (NLLLIGFSTCLTACIVLTVAL) traverse the membrane as a helical segment. Residues 363-370 (ALQNTISW) lie on the Extracellular side of the membrane. A helical transmembrane segment spans residues 371–393 (MPYVSIVCVIVYVIGHAVGPSPI). H386 is a binding site for D-fructose. Over 394 to 411 (PALFITEIFLQSSRPSAY) the chain is Cytoplasmic. Residues 412 to 432 (MIGGSVHWLSNFIVGLIFPFI) form a helical membrane-spanning segment. 418 to 419 (HW) contributes to the D-fructose binding site. Over 433-438 (QVGLGP) the chain is Extracellular. Residues 439 to 459 (YSFIIFAIICLLTTIYIFMVV) traverse the membrane as a helical segment. Residues 460–502 (PETKGRTFVEINQIFAKKNKVSDVYPEKEEKELNDLPPATREQ) are Cytoplasmic-facing.

This sequence belongs to the major facilitator superfamily. Sugar transporter (TC 2.A.1.1) family. Glucose transporter subfamily. Detected in jejunum. Detected in kidney, skeletal muscle, brain and adipose tissue (at protein level). Detected in small intestine and in kidney, and at much lower levels in brain. Detected in enterocytes in duodenum, jejunum, and ileum.

The protein localises to the apical cell membrane. Its subcellular location is the cell membrane. The protein resides in the sarcolemma. The catalysed reaction is D-fructose(out) = D-fructose(in). With respect to regulation, fructose uptake is inhibited by mercury ions. Fructose uptake is only slightly inhibited by cytochalasin B. Functions as a fructose transporter that has only low activity with other monosaccharides. Can mediate the uptake of deoxyglucose, but with low efficiency. Essential for fructose uptake in the small intestine. Plays a role in the regulation of salt uptake and blood pressure in response to dietary fructose. Required for the development of high blood pressure in response to high dietary fructose intake. The protein is Solute carrier family 2, facilitated glucose transporter member 5 of Rattus norvegicus (Rat).